The sequence spans 205 residues: Dephospho-CoA kinase (205 aa).

The DPCK domain maps to 7 to 205 (IIGVTGRIAS…QGIINYERFE (199 aa)). Position 15-20 (15-20 (ASGKDT)) interacts with ATP.

The protein belongs to the CoaE family.

It localises to the cytoplasm. The enzyme catalyses 3'-dephospho-CoA + ATP = ADP + CoA + H(+). The protein operates within cofactor biosynthesis; coenzyme A biosynthesis; CoA from (R)-pantothenate: step 5/5. Its function is as follows. Catalyzes the phosphorylation of the 3'-hydroxyl group of dephosphocoenzyme A to form coenzyme A. The sequence is that of Dephospho-CoA kinase from Borreliella burgdorferi (strain ATCC 35210 / DSM 4680 / CIP 102532 / B31) (Borrelia burgdorferi).